We begin with the raw amino-acid sequence, 828 residues long: Deubiquitinase MYSM1 (828 aa).

The segment covering Met-1–Gly-12 has biased composition (acidic residues). Residues Met-1–Val-31 are disordered. Residue Ser-110 is modified to Phosphoserine. The SANT domain maps to Ser-116–Val-167. Lys-187 is covalently cross-linked (Glycyl lysine isopeptide (Lys-Gly) (interchain with G-Cter in SUMO2)). Ser-218 carries the phosphoserine modification. Position 236 is a phosphothreonine (Thr-236). A phosphoserine mark is found at Ser-242, Ser-267, and Ser-340. The SWIRM domain occupies Leu-372 to Arg-470. The MPN domain occupies Val-577–Leu-709. Residues His-656, His-658, and Asp-669 each contribute to the Zn(2+) site. The short motif at His-656–Asp-669 is the JAMM motif element. The LXXLL motif signature appears at Leu-774–Leu-778.

The protein belongs to the peptidase M67A family. MYSM1 subfamily. Component of a large chromatin remodeling complex, at least composed of MYSM1, PCAF, RBM10 and KIF11/TRIP5. Binds histones. Interacts with NFIL3; this interaction is critical for their correct recruitment to the ID2 locus during natural killer cell maturation.

It localises to the nucleus. The protein resides in the cytoplasm. In terms of biological role, metalloprotease with deubiquitinase activity that plays important regulator roles in hematopoietic stem cell function, blood cell production and immune response. Participates in the normal programming of B-cell responses to antigen after the maturation process. Within the cytoplasm, plays critical roles in the repression of innate immunity and autoimmunity. Removes 'Lys-63'-linked polyubiquitins from TRAF3 and TRAF6 complexes. Attenuates NOD2-mediated inflammation and tissue injury by promoting 'Lys-63'-linked deubiquitination of RIPK2 component. Suppresses the CGAS-STING1 signaling pathway by cleaving STING1 'Lys-63'-linked ubiquitin chains. In the nucleus, acts as a hematopoietic transcription regulator derepressing a range of genes essential for normal stem cell differentiation including EBF1 and PAX5 in B-cells, ID2 in NK-cell progenitor or FLT3 in dendritic cell precursors. Deubiquitinates monoubiquitinated histone H2A, a specific tag for epigenetic transcriptional repression, leading to dissociation of histone H1 from the nucleosome. In Homo sapiens (Human), this protein is Deubiquitinase MYSM1 (MYSM1).